We begin with the raw amino-acid sequence, 262 residues long: Phosphonates import ATP-binding protein PhnC (262 aa).

The ABC transporter domain occupies 5-253 (IRVEKLAKTF…RFDHLYRSIN (249 aa)). 37 to 44 (GPSGSGKS) contacts ATP.

Belongs to the ABC transporter superfamily. Phosphonates importer (TC 3.A.1.9.1) family. In terms of assembly, the complex is composed of two ATP-binding proteins (PhnC), two transmembrane proteins (PhnE) and a solute-binding protein (PhnD).

It localises to the cell inner membrane. It carries out the reaction phosphonate(out) + ATP + H2O = phosphonate(in) + ADP + phosphate + H(+). Its function is as follows. Part of the ABC transporter complex PhnCDE involved in phosphonates, phosphate esters, phosphite and phosphate import. Responsible for energy coupling to the transport system. This Escherichia coli (strain K12) protein is Phosphonates import ATP-binding protein PhnC.